We begin with the raw amino-acid sequence, 352 residues long: Molybdenum import ATP-binding protein ModC (352 aa).

Residues 1-229 (MLELNFSQTL…SVMNPWLPKE (229 aa)) form the ABC transporter domain. Position 31 to 38 (31 to 38 (GVSGAGKT)) interacts with ATP. In terms of domain architecture, Mop spans 289–352 (QTSIRNVLRA…AQIKSVSITA (64 aa)).

Belongs to the ABC transporter superfamily. Molybdate importer (TC 3.A.1.8) family. The complex is composed of two ATP-binding proteins (ModC), two transmembrane proteins (ModB) and a solute-binding protein (ModA).

The protein localises to the cell inner membrane. The catalysed reaction is molybdate(out) + ATP + H2O = molybdate(in) + ADP + phosphate + H(+). Part of the ABC transporter complex ModABC involved in molybdenum import. Responsible for energy coupling to the transport system. This chain is Molybdenum import ATP-binding protein ModC, found in Escherichia coli (strain K12).